Reading from the N-terminus, the 563-residue chain is Cytochrome P450 monooxygenase efuG (563 aa).

A helical membrane pass occupies residues 10 to 30 (ITSHQWGIGSVFLLISIPLIV). The tract at residues 462–482 (PDDPQSGPRKDAKKQKAKSDG) is disordered. Residue cysteine 505 coordinates heme.

This sequence belongs to the cytochrome P450 family. Requires heme as cofactor.

Its subcellular location is the membrane. The protein operates within secondary metabolite biosynthesis; terpenoid biosynthesis. In terms of biological role, cytochrome P450 monooxygenase; part of the gene cluster that mediates the biosynthesis of enfumafungin, a glycosylated fernene-type triterpenoid with potent antifungal activity, mediated by its interaction with beta-1,3-glucan synthase and the fungal cell wall. The pathway begins with the terpene cyclase-glycosyl transferase fusion protein that most likely uses 2,3-oxidosqualene as substrate and catalyzes glycosylation immediately after cyclization. The fernene glycoside then could be processed by the desaturase efuI which catalyzes isomerization of a double bond established by efuA to form the core structure. The latter would then undergo a series of hydroxylations in unknown order at C-2, C-19, C-23 and C-25, which would be catalyzed by two of the three cytochrome P450 monooxygenases efuB, efuG or efuH. The hydroxy-group at C-25 becomes oxidized by the dehydrogenase efuE to enable a spontaneous, non-enzymatic hemiacetal formation with C-23. After hydroxylation at C-2, acetylation by the acetyltransferase efuC takes place. The final steps in enfumafungin biosynthesis require expansion of the 5-membered ring by lactonization via a Baeyer-Villiger reaction mediated by one of the BGC's cytochrome P450 monooxygenases (efuB, efuG or efuH) followed by ring cleavage. This type of reaction would establish a double bond between C-20 and C-21 which could be reduced by the reductase efuL to form the final product. The sequence is that of Cytochrome P450 monooxygenase efuG from Hormonema carpetanum.